Here is a 471-residue protein sequence, read N- to C-terminus: Citrate synthase, mitochondrial (471 aa).

Active-site residues include His-309, His-355, and Asp-409.

The protein belongs to the citrate synthase family. Homodimer. Ubiquitous.

The protein localises to the mitochondrion matrix. The enzyme catalyses oxaloacetate + acetyl-CoA + H2O = citrate + CoA + H(+). The protein operates within carbohydrate metabolism; tricarboxylic acid cycle; isocitrate from oxaloacetate: step 1/2. This chain is Citrate synthase, mitochondrial, found in Solanum tuberosum (Potato).